The chain runs to 396 residues: Elongation factor Tu (396 aa).

The tr-type G domain occupies 10-205 (KSHANIGTIG…AVDEYIPTPE (196 aa)). The G1 stretch occupies residues 19-26 (GHVDHGKT). 19–26 (GHVDHGKT) contacts GTP. A Mg(2+)-binding site is contributed by Thr26. Residues 61-65 (GITIS) are G2. Residues 82-85 (DCPG) are G3. GTP-binding positions include 82–86 (DCPGH) and 137–140 (NKCD). The G4 stretch occupies residues 137–140 (NKCD). Residues 175 to 177 (SAL) are G5. Position 385 is a phosphothreonine (Thr385).

Belongs to the TRAFAC class translation factor GTPase superfamily. Classic translation factor GTPase family. EF-Tu/EF-1A subfamily. In terms of assembly, monomer. Interacts with BrxC. Post-translationally, phosphorylated on Thr-385 in vitro by PrkC in the presence of poly-L-lysine or myelin basic protein, dephosphorylated by PrpC.

The protein resides in the cytoplasm. The enzyme catalyses GTP + H2O = GDP + phosphate + H(+). Its function is as follows. GTP hydrolase that promotes the GTP-dependent binding of aminoacyl-tRNA to the A-site of ribosomes during protein biosynthesis. This chain is Elongation factor Tu, found in Bacillus subtilis (strain 168).